The chain runs to 367 residues: Glutamate 5-kinase (367 aa).

ATP is bound at residue Lys-17. Substrate is bound by residues Ser-57, Asp-144, and Asn-156. Residues 176–177 (SD) and 217–223 (TGGMVSK) contribute to the ATP site. The region spanning 279–357 (VGSLTLDEGA…SELPCELRRP (79 aa)) is the PUA domain.

This sequence belongs to the glutamate 5-kinase family.

The protein localises to the cytoplasm. The enzyme catalyses L-glutamate + ATP = L-glutamyl 5-phosphate + ADP. It participates in amino-acid biosynthesis; L-proline biosynthesis; L-glutamate 5-semialdehyde from L-glutamate: step 1/2. Its function is as follows. Catalyzes the transfer of a phosphate group to glutamate to form L-glutamate 5-phosphate. The chain is Glutamate 5-kinase from Mycobacterium leprae (strain Br4923).